A 422-amino-acid polypeptide reads, in one-letter code: Serine protease HTRA2, mitochondrial (422 aa).

Residues 1–17 (MALRGSHRLEVIFKRCI) constitute a mitochondrion transit peptide. Positions 18-74 (ASPVFHSHAANRRSSQLAIKGTDPSSNGNSGQDQQNGEQKAKGWRRLVRFFVPFSLG) are excised as a propeptide. Positions 29–55 (RRSSQLAIKGTDPSSNGNSGQDQQNGE) are enriched in polar residues. The interval 29-56 (RRSSQLAIKGTDPSSNGNSGQDQQNGEQ) is disordered. The helical transmembrane segment at 64–82 (LVRFFVPFSLGAAVSAAVI) threads the bilayer. Short sequence motifs (IAP-binding) lie at residues 75–78 (AAVS) and 94–97 (SKMT). The tract at residues 139–302 (SNGSGFIIEQ…IPIDYVKVFL (164 aa)) is serine protease. Active-site charge relay system residues include His-157, Asp-189, and Ser-266. In terms of domain architecture, PDZ spans 325-410 (MGITMLTLTP…NLDIVILRGV (86 aa)).

Belongs to the peptidase S1C family. In terms of assembly, interacts with th/DIAP1 (via BIR 2 domain).

Its subcellular location is the mitochondrion intermembrane space. The protein resides in the mitochondrion membrane. The catalysed reaction is Cleavage of non-polar aliphatic amino-acids at the P1 position, with a preference for Val, Ile and Met. At the P2 and P3 positions, Arg is selected most strongly with a secondary preference for other hydrophilic residues.. In terms of biological role, serine protease that shows proteolytic activity against a non-specific substrate beta-casein. Promotes or induces cell death either by direct binding to and inhibition of BIRC proteins (also called inhibitor of apoptosis proteins, IAPs), leading to an increase in caspase activity, or by a BIRC inhibition-independent, caspase-independent and serine protease activity-dependent mechanism. Can antagonize antiapoptotic activity of th/Diap1 by directly inducing the degradation of th/Diap1. The protein is Serine protease HTRA2, mitochondrial of Drosophila yakuba (Fruit fly).